The following is a 92-amino-acid chain: UPF0237 protein MA_3235 (92 aa).

An ACT domain is found at 7 to 81 (IITVIGSDRV…KSLGVEVKVQ (75 aa)).

This sequence belongs to the UPF0237 family.

The sequence is that of UPF0237 protein MA_3235 from Methanosarcina acetivorans (strain ATCC 35395 / DSM 2834 / JCM 12185 / C2A).